We begin with the raw amino-acid sequence, 359 residues long: Alanine racemase, biosynthetic (359 aa).

Lys-34 serves as the catalytic Proton acceptor; specific for D-alanine. Residue Lys-34 is modified to N6-(pyridoxal phosphate)lysine. Substrate is bound at residue Arg-129. Residue Tyr-255 is the Proton acceptor; specific for L-alanine of the active site. Met-303 is a substrate binding site.

Belongs to the alanine racemase family. In terms of assembly, monomer but homodimer in the presence of the substrate. Requires pyridoxal 5'-phosphate as cofactor.

The catalysed reaction is L-alanine = D-alanine. Its pathway is amino-acid biosynthesis; D-alanine biosynthesis; D-alanine from L-alanine: step 1/1. It participates in cell wall biogenesis; peptidoglycan biosynthesis. Its function is as follows. Catalyzes the interconversion of L-alanine and D-alanine. The chain is Alanine racemase, biosynthetic (alr) from Shigella dysenteriae.